We begin with the raw amino-acid sequence, 76 residues long: UPF0248 protein MmarC5_1387 (76 aa).

Belongs to the UPF0248 family.

The polypeptide is UPF0248 protein MmarC5_1387 (Methanococcus maripaludis (strain C5 / ATCC BAA-1333)).